Reading from the N-terminus, the 285-residue chain is (3S)-malyl-CoA thioesterase (285 aa).

Residues arginine 70 and glutamate 122 each contribute to the substrate site. The Mg(2+) site is built by glutamate 122 and aspartate 148.

Belongs to the HpcH/HpaI aldolase family. In terms of assembly, homodimer or homotrimer. Requires Mg(2+) as cofactor.

The enzyme catalyses (S)-malyl-CoA + H2O = (S)-malate + CoA + H(+). In terms of biological role, catalyzes the hydrolysis of (3S)-malyl-CoA to (3S)-malate and free CoA. Inactive towards beta-methylmalyl-CoA and other CoA esters. The sequence is that of (3S)-malyl-CoA thioesterase from Cereibacter sphaeroides (strain ATCC 17029 / ATH 2.4.9) (Rhodobacter sphaeroides).